A 250-amino-acid polypeptide reads, in one-letter code: Aquaporin TIP2-2 (250 aa).

Helical transmembrane passes span 22 to 42 (VAEFIATLLFVFAGVGSAIAF) and 54 to 74 (AGLVAIAVAHALALFVGVSVA). The NPA 1 signature appears at 83-85 (NPA). The next 3 membrane-spanning stretches (helical) occupy residues 97–119 (TVLTGLFYWVAQLLGASVACLLL), 142–162 (GVVFEIVITFALVYTVYATAA), and 169–189 (LGTIAPIAIGFIVGANILAAG). Residues 197-199 (NPA) carry the NPA 2 motif. The chain crosses the membrane as a helical span at residues 218–238 (WVGPLIGGGLAGLVYGDVFIG).

The protein belongs to the MIP/aquaporin (TC 1.A.8) family. TIP (TC 1.A.8.10) subfamily.

It localises to the vacuole membrane. In terms of biological role, aquaporins facilitate the transport of water and small neutral solutes across cell membranes. The protein is Aquaporin TIP2-2 (TIP2-2) of Zea mays (Maize).